Reading from the N-terminus, the 158-residue chain is SUMO-conjugating enzyme UBC9 (158 aa).

One can recognise a UBC core domain in the interval isoleucine 4–proline 157. The interaction with SUMO1 stretch occupies residues arginine 13 to lysine 18. Cysteine 93 functions as the Glycyl thioester intermediate in the catalytic mechanism.

Belongs to the ubiquitin-conjugating enzyme family. Interacts with SOX9.

It localises to the nucleus. Its subcellular location is the cytoplasm. It functions in the pathway protein modification; protein sumoylation. Accepts the ubiquitin-like proteins SUMO1, SUMO2 and SUMO3 from the UBLE1A-UBLE1B E1 complex and catalyzes their covalent attachment to other proteins with the help of an E3 ligase such as RANBP2 or CBX4. Essential for nuclear architecture and chromosome segregation. The chain is SUMO-conjugating enzyme UBC9 (UBE2I) from Gallus gallus (Chicken).